A 107-amino-acid polypeptide reads, in one-letter code: NADH dehydrogenase [ubiquinone] 1 beta subcomplex subunit 10-A (107 aa).

The disordered stretch occupies residues 1–23 (MGRKKGLPEFEESAPDGFDPENP).

It belongs to the complex I NDUFB10 subunit family. Complex I is composed of at least 49 different subunits.

It localises to the mitochondrion inner membrane. In terms of biological role, accessory subunit of the mitochondrial membrane respiratory chain NADH dehydrogenase (Complex I), that is believed not to be involved in catalysis. Complex I functions in the transfer of electrons from NADH to the respiratory chain. The immediate electron acceptor for the enzyme is believed to be ubiquinone. The protein is NADH dehydrogenase [ubiquinone] 1 beta subcomplex subunit 10-A of Arabidopsis thaliana (Mouse-ear cress).